A 353-amino-acid chain; its full sequence is MTAILERRESESLWGRFCNWITSTENRLYIGWFGVLMIPTLLTATSVFIIAFIAAPPVDIDGIREPVSGSLLYGNNIISGAIIPTSAAIGLHFYPIWEAASVDEWLYNGGPYELIVLHFLLGVACYMGREWELSFRLGMRPWIAVAYSAPVAAATAVFLIYPIGQGSFSDGMPLGISGTFNFMIVFQAEHNILMHPFHMLGVAGVFGGSLFSAMHGSLVTSSLIRETTENESANEGYRFGQEEETYNIVAAHGYFGRLIFQYASFNNSRSLHFFLAAWPVIGIWFTALGISTMAFNLNGFNFNQSVVDSQGRVINTWADIINRANLGMEVMHERNAHNFPLDLAAVEAPSTNG.

Threonine 2 is subject to N-acetylthreonine. Phosphothreonine is present on threonine 2. The next 3 helical transmembrane spans lie at 29 to 46, 118 to 133, and 142 to 156; these read YIGWFGVLMIPTLLTATS, HFLLGVACYMGREWEL, and WIAVAYSAPVAAATA. Residue histidine 118 participates in chlorophyll a binding. Tyrosine 126 serves as a coordination point for pheophytin a. 2 residues coordinate [CaMn4O5] cluster: aspartate 170 and glutamate 189. Residues 197–218 traverse the membrane as a helical segment; that stretch reads FHMLGVAGVFGGSLFSAMHGSL. Residue histidine 198 participates in chlorophyll a binding. A quinone contacts are provided by residues histidine 215 and 264–265; that span reads SF. Histidine 215 lines the Fe cation pocket. Histidine 272 contributes to the Fe cation binding site. A helical membrane pass occupies residues 274–288; it reads FLAAWPVIGIWFTAL. [CaMn4O5] cluster-binding residues include histidine 332, glutamate 333, aspartate 342, and alanine 344. Residues 345–353 constitute a propeptide that is removed on maturation; sequence AVEAPSTNG.

It belongs to the reaction center PufL/M/PsbA/D family. As to quaternary structure, PSII is composed of 1 copy each of membrane proteins PsbA, PsbB, PsbC, PsbD, PsbE, PsbF, PsbH, PsbI, PsbJ, PsbK, PsbL, PsbM, PsbT, PsbX, PsbY, PsbZ, Psb30/Ycf12, at least 3 peripheral proteins of the oxygen-evolving complex and a large number of cofactors. It forms dimeric complexes. Requires The D1/D2 heterodimer binds P680, chlorophylls that are the primary electron donor of PSII, and subsequent electron acceptors. It shares a non-heme iron and each subunit binds pheophytin, quinone, additional chlorophylls, carotenoids and lipids. D1 provides most of the ligands for the Mn4-Ca-O5 cluster of the oxygen-evolving complex (OEC). There is also a Cl(-1) ion associated with D1 and D2, which is required for oxygen evolution. The PSII complex binds additional chlorophylls, carotenoids and specific lipids. as cofactor. Post-translationally, tyr-161 forms a radical intermediate that is referred to as redox-active TyrZ, YZ or Y-Z. In terms of processing, C-terminally processed by CTPA; processing is essential to allow assembly of the oxygen-evolving complex and thus photosynthetic growth.

It is found in the plastid. The protein localises to the chloroplast thylakoid membrane. It catalyses the reaction 2 a plastoquinone + 4 hnu + 2 H2O = 2 a plastoquinol + O2. Functionally, photosystem II (PSII) is a light-driven water:plastoquinone oxidoreductase that uses light energy to abstract electrons from H(2)O, generating O(2) and a proton gradient subsequently used for ATP formation. It consists of a core antenna complex that captures photons, and an electron transfer chain that converts photonic excitation into a charge separation. The D1/D2 (PsbA/PsbD) reaction center heterodimer binds P680, the primary electron donor of PSII as well as several subsequent electron acceptors. The chain is Photosystem II protein D1 from Buxus microphylla (Littleleaf boxwood).